Consider the following 105-residue polypeptide: Urease subunit beta (105 aa).

It belongs to the urease beta subunit family. Heterotrimer of UreA (gamma), UreB (beta) and UreC (alpha) subunits. Three heterotrimers associate to form the active enzyme.

The protein localises to the cytoplasm. It carries out the reaction urea + 2 H2O + H(+) = hydrogencarbonate + 2 NH4(+). The protein operates within nitrogen metabolism; urea degradation; CO(2) and NH(3) from urea (urease route): step 1/1. This chain is Urease subunit beta, found in Pseudomonas putida (strain W619).